Reading from the N-terminus, the 239-residue chain is DNA damage-regulated autophagy modulator protein 1 (239 aa).

The next 6 membrane-spanning stretches (helical) occupy residues 15 to 35 (ILVIWSSAGFLFSYIISVLIG), 54 to 74 (SGVFGFMISVSAMLGAATMYT), 91 to 111 (IYFNKISLAIGLFGCIGMGIV), 119 to 139 (VPAVHDAGALITFICGVMYIL), 162 to 182 (MTVSLIAFIAVVPMSVFSILS), and 201 to 221 (TSAICEWTVAFGFNMYFLTFI).

It belongs to the DRAM/TMEM150 family.

The protein localises to the lysosome membrane. Lysosomal modulator of autophagy that plays a central role in p53/TP53-mediated apoptosis. The chain is DNA damage-regulated autophagy modulator protein 1 (dram1) from Xenopus laevis (African clawed frog).